The primary structure comprises 232 residues: Small heat shock protein, chloroplastic (232 aa).

The span at 1–25 shows a compositional bias: polar residues; it reads MAQSVSLSTIASPILSQKPGSSVKS. Disordered regions lie at residues 1 to 35 and 48 to 81; these read MAQS…SFPL and RAQA…RKPR. The N-terminal 46 residues, 1–46, are a transit peptide targeting the chloroplast; sequence MAQSVSLSTIASPILSQKPGSSVKSTPPCMASFPLRRQLPRLGLRN. Positions 55–78 are enriched in basic and acidic residues; the sequence is GDNKDNSVEVHRVNKDDQGTAVER. In terms of domain architecture, sHSP spans 124-232; the sequence is IGGGEIRVPW…ERTVIDVQIQ (109 aa).

Belongs to the small heat shock protein (HSP20) family.

It is found in the plastid. The protein localises to the chloroplast. The chain is Small heat shock protein, chloroplastic (HSP21) from Pisum sativum (Garden pea).